Consider the following 525-residue polypeptide: Cytochrome P450 4V2 (525 aa).

The helical transmembrane segment at 13 to 33 (LLLWGAASAVSLAGASLVLSL) threads the bilayer. The heme site is built by E329 and C467.

Belongs to the cytochrome P450 family. It depends on heme as a cofactor.

Its subcellular location is the endoplasmic reticulum membrane. It carries out the reaction dodecanoate + reduced [NADPH--hemoprotein reductase] + O2 = 12-hydroxydodecanoate + oxidized [NADPH--hemoprotein reductase] + H2O + H(+). The catalysed reaction is tetradecanoate + reduced [NADPH--hemoprotein reductase] + O2 = 14-hydroxytetradecanoate + oxidized [NADPH--hemoprotein reductase] + H2O + H(+). The enzyme catalyses hexadecanoate + reduced [NADPH--hemoprotein reductase] + O2 = 16-hydroxyhexadecanoate + oxidized [NADPH--hemoprotein reductase] + H2O + H(+). It catalyses the reaction (5Z,8Z,11Z,14Z,17Z)-eicosapentaenoate + reduced [NADPH--hemoprotein reductase] + O2 = 20-hydroxy-(5Z,8Z,11Z,14Z,17Z)-eicosapentaenoate + oxidized [NADPH--hemoprotein reductase] + H2O + H(+). It carries out the reaction (4Z,7Z,10Z,13Z,16Z,19Z)-docosahexaenoate + reduced [NADPH--hemoprotein reductase] + O2 = 22-hydroxy-(4Z,7Z,10Z,13Z,16Z,19Z)-docosahexaenoate + oxidized [NADPH--hemoprotein reductase] + H2O + H(+). It participates in lipid metabolism; fatty acid metabolism. Its activity is regulated as follows. Inhibited by N-hydroxy-N'-(4-n-butyl-2-methylphenyl formamidine)(HET0016) with an IC(50) of 38 nM. Its function is as follows. A cytochrome P450 monooxygenase involved in fatty acid metabolism in the eye. Catalyzes the omega-hydroxylation of polyunsaturated fatty acids (PUFAs) docosahexaenoate (DHA) and its precursor eicosapentaenoate (EPA), and may contribute to the homeostasis of these retinal PUFAs. Omega hydroxylates saturated fatty acids such as laurate, myristate and palmitate, the catalytic efficiency decreasing in the following order: myristate &gt; laurate &gt; palmitate (C14&gt;C12&gt;C16). Mechanistically, uses molecular oxygen inserting one oxygen atom into a substrate, and reducing the second into a water molecule, with two electrons provided by NADPH via cytochrome P450 reductase (CPR; NADPH-ferrihemoprotein reductase). This chain is Cytochrome P450 4V2 (CYP4V2), found in Pongo abelii (Sumatran orangutan).